The primary structure comprises 418 residues: Magnesium-chelatase subunit ChlI-2, chloroplastic (418 aa).

A chloroplast-targeting transit peptide spans 1–55 (MASLLGRSPSSILTCPRISSPSSTSSMSHLCFGPEKLSGRIQFNPKKNRSRYHVS). Val56 is subject to N-acetylvaline. Intrachain disulfides connect Cys96–Cys187 and Cys348–Cys390. An ATP-binding site is contributed by 113 to 120 (GDRGTGKS).

The protein belongs to the Mg-chelatase subunits D/I family. The magnesium chelatase complex is a heterotrimer consisting of subunits CHLI, CHLD and CHLH. In terms of tissue distribution, expressed in leaves.

It is found in the plastid. It localises to the chloroplast. It catalyses the reaction protoporphyrin IX + Mg(2+) + ATP + H2O = Mg-protoporphyrin IX + ADP + phosphate + 3 H(+). It participates in porphyrin-containing compound metabolism; chlorophyll biosynthesis. With respect to regulation, redox regulation; active in reducing conditions, inactive in oxidizing conditions. Thioredoxins f and m mediate the reversible reductive activation of oxidized CHLI2. Functionally, involved in chlorophyll biosynthesis. Catalyzes the insertion of magnesium ion into protoporphyrin IX to yield Mg-protoporphyrin IX. The reaction takes place in two steps, with an ATP-dependent activation followed by an ATP-dependent chelation step. Possesses low affinity for ATP and may play a limited role in chlorophyll biosynthesis, and contributes to the assembly of the Mg-chelatase complex. In Arabidopsis thaliana (Mouse-ear cress), this protein is Magnesium-chelatase subunit ChlI-2, chloroplastic (CHLI2).